The chain runs to 288 residues: MQGVFPAIITPFKNGGVDYEGLEQNINFLIDNGVNGIVSVGTTGESPTLSHDEHKKIIEKSVSVCDGKVDVIAGAGSNSTEEAIALSQFAEDVGADSVLLITPYYNKPTQEGLKQHFSKIAESINIPIVLYNVPSRTAVNLQPETIKYLYEEYSNITTVKEANPDLSHISDVINSCDISVLSGNDELTLPVISLGGNGVISVVANIVPNEFVQMVNYANEGKFKEAREIHYKLFNLMKSLFIETNPVPIKTAMNLLNMPAGDLRLPLCKMEEENKFKLETALKEYGLL.

T43 contacts pyruvate. Y131 serves as the catalytic Proton donor/acceptor. K160 functions as the Schiff-base intermediate with substrate in the catalytic mechanism. I200 contributes to the pyruvate binding site.

This sequence belongs to the DapA family. Homotetramer; dimer of dimers.

Its subcellular location is the cytoplasm. It carries out the reaction L-aspartate 4-semialdehyde + pyruvate = (2S,4S)-4-hydroxy-2,3,4,5-tetrahydrodipicolinate + H2O + H(+). The protein operates within amino-acid biosynthesis; L-lysine biosynthesis via DAP pathway; (S)-tetrahydrodipicolinate from L-aspartate: step 3/4. Functionally, catalyzes the condensation of (S)-aspartate-beta-semialdehyde [(S)-ASA] and pyruvate to 4-hydroxy-tetrahydrodipicolinate (HTPA). The protein is 4-hydroxy-tetrahydrodipicolinate synthase of Methanococcus aeolicus (strain ATCC BAA-1280 / DSM 17508 / OCM 812 / Nankai-3).